The primary structure comprises 259 residues: Energy-coupling factor transporter ATP-binding protein EcfA1 (259 aa).

Positions 3–230 (ITLNSVSFRY…EFDDVEIPFK (228 aa)) constitute an ABC transporter domain. 38–43 (GSGKTT) contributes to the ATP binding site. Glu-157 acts as the Proton acceptor in catalysis.

The protein belongs to the ABC transporter superfamily. Energy-coupling factor EcfA family. In terms of assembly, forms a heterodimer with EcfA2. Forms a stable energy-coupling factor (ECF) transporter complex composed of 2 membrane-embedded substrate-binding proteins (S component, RibU, BioY), 2 ATP-binding proteins (A component) and 2 transmembrane proteins (T component) upon coexpression in E.coli. Stable subcomplexes with both A plus T components can also be isolated. This complex interacts with at least 2 substrate-specific components, BioY and RibU.

It is found in the cell inner membrane. In terms of biological role, ATP-binding (A) component of a common energy-coupling factor (ECF) ABC-transporter complex. Unlike classic ABC transporters this ECF transporter provides the energy necessary to transport a number of different substrates. Expression of the complex plus RibU in E.coli allows riboflavin uptake; uptake does not occur in the absence of RibU or the EcfA1A2T complex. In Thermotoga maritima (strain ATCC 43589 / DSM 3109 / JCM 10099 / NBRC 100826 / MSB8), this protein is Energy-coupling factor transporter ATP-binding protein EcfA1.